Consider the following 292-residue polypeptide: High-affinity heme uptake system protein IsdE (292 aa).

Residues Met-1 to Ser-19 form the signal peptide. Cys-20 carries N-palmitoyl cysteine lipidation. A lipid anchor (S-diacylglycerol cysteine) is attached at Cys-20. The Fe/B12 periplasmic-binding domain occupies Arg-35–Lys-291. Residues Val-41, Ala-42, Ser-60, Tyr-61, Met-78, and His-229 each coordinate heme.

It belongs to the bacterial solute-binding protein 8 family. Heme b serves as cofactor.

The protein localises to the cell membrane. Involved in heme (porphyrin) scavenging. Binds Fe(2+) and Fe(3+) heme but the largest fraction is Fe(2+) heme. Functions as a high-affinity heme binding protein and probably has a role in relaying heme-iron from cell wall-anchored isd proteins receptors to the probable permease IsdF. The sequence is that of High-affinity heme uptake system protein IsdE (isdE) from Staphylococcus aureus (strain MRSA252).